We begin with the raw amino-acid sequence, 851 residues long: DNA mismatch repair protein MutS (851 aa).

Residue 614–621 coordinates ATP; sequence GPNMGGKS.

It belongs to the DNA mismatch repair MutS family.

Its function is as follows. This protein is involved in the repair of mismatches in DNA. It is possible that it carries out the mismatch recognition step. This protein has a weak ATPase activity. The sequence is that of DNA mismatch repair protein MutS from Serratia proteamaculans (strain 568).